A 24-amino-acid chain; its full sequence is Protein YriA (24 aa).

In Escherichia coli (strain K12), this protein is Protein YriA.